The following is a 976-amino-acid chain: Fiber protein (976 aa).

It belongs to the adenoviridae fiber family. Homotrimer. Interacts (via N-terminal tail region) with pentons.

Its subcellular location is the virion. It localises to the host nucleus. Its function is as follows. Forms spikes that protrude from each vertex of the icosahedral capsid. Interacts with host receptor to provide virion initial attachment to target cell. Fiber proteins are shed during virus entry, when virus is still at the cell surface. The chain is Fiber protein from Bovine adenovirus B serotype 3 (BAdV-3).